Here is a 158-residue protein sequence, read N- to C-terminus: D-aminoacyl-tRNA deacylase (158 aa).

The Gly-cisPro motif, important for rejection of L-amino acids signature appears at 144-145; it reads GP.

This sequence belongs to the DTD family. As to quaternary structure, homodimer.

It localises to the cytoplasm. It carries out the reaction glycyl-tRNA(Ala) + H2O = tRNA(Ala) + glycine + H(+). It catalyses the reaction a D-aminoacyl-tRNA + H2O = a tRNA + a D-alpha-amino acid + H(+). An aminoacyl-tRNA editing enzyme that deacylates mischarged D-aminoacyl-tRNAs. Also deacylates mischarged glycyl-tRNA(Ala), protecting cells against glycine mischarging by AlaRS. Acts via tRNA-based rather than protein-based catalysis; rejects L-amino acids rather than detecting D-amino acids in the active site. By recycling D-aminoacyl-tRNA to D-amino acids and free tRNA molecules, this enzyme counteracts the toxicity associated with the formation of D-aminoacyl-tRNA entities in vivo and helps enforce protein L-homochirality. The chain is D-aminoacyl-tRNA deacylase from Corynebacterium kroppenstedtii (strain DSM 44385 / JCM 11950 / CIP 105744 / CCUG 35717).